We begin with the raw amino-acid sequence, 447 residues long: GTPase Der (447 aa).

2 EngA-type G domains span residues 4 to 165 (QIIA…PKEK) and 180 to 357 (VQIV…KNWN). GTP contacts are provided by residues 10–17 (GRPNVGKS), 57–61 (DTPGL), 119–122 (NKCE), 186–193 (GRPNAGKS), 233–237 (DTAGL), and 298–301 (NKWD). Residues 358–443 (KKITTSKLNE…PIRFAYVKTK (86 aa)) form the KH-like domain.

It belongs to the TRAFAC class TrmE-Era-EngA-EngB-Septin-like GTPase superfamily. EngA (Der) GTPase family. Associates with the 50S ribosomal subunit.

Its function is as follows. GTPase that plays an essential role in the late steps of ribosome biogenesis. The protein is GTPase Der of Rickettsia canadensis (strain McKiel).